A 232-amino-acid polypeptide reads, in one-letter code: (S)-2-haloacid dehalogenase (232 aa).

Asp-10 acts as the Nucleophile in catalysis. An (S)-2-haloacid-binding positions include 11–12 (LY), Arg-41, and 118–119 (SN). Positions 175–180 (SSNAWD) are important for catalytic activity.

The protein belongs to the HAD-like hydrolase superfamily. S-2-haloalkanoic acid dehalogenase family. In terms of assembly, homodimer.

The enzyme catalyses an (S)-2-haloacid + H2O = a (2R)-2-hydroxycarboxylate + a halide anion + H(+). It carries out the reaction (S)-2-chloropropanoate + H2O = (R)-lactate + chloride + H(+). Functionally, catalyzes the hydrolytic dehalogenation of small (S)-2-haloalkanoic acids to yield the corresponding (R)-2-hydroxyalkanoic acids. Acts on acids of short chain lengths, C(2) to C(4), with inversion of configuration at C-2. Active with 2-halogenated carboxylic acids and converts only the S-isomer (or L-isomer) of 2-chloropropionic acid with inversion of configuration to produce R-lactate (or D-isomer). The sequence is that of (S)-2-haloacid dehalogenase from Pseudomonas sp. (strain YL).